Reading from the N-terminus, the 355-residue chain is MKVYFENYSYYPALRTRSAEMTGLNNLSYENKKKILPLISLGKWPRSEEIQVSLDKSLEVMSNLPFILDVTKDNSHHCASSFELLSPENGFKNWIEFCSRNDNIIPVVQMPDSAKLRDISIQARVLEELKGSIAFRIRNLNTDINKTLTSLVSMNSPENAIVFIDLGYIRGNVSAITAAAINSINQIRTEIPEAIISVLATSFPSSVTNFCRENGQSGYIDVIERELHQNIGGSDVAIYGDHGSIHSVVYDNIIGRYVPRIDIALNDSWYFERRPGMNKEGFIEAAKSILAEYPHYQREDSWGAAMIRNAAIGDIAGMGSPAKWIAVRVNLHLNKQIELSEALQYGFDHDEEDLI.

Its function is as follows. The presence of this protein prevents gop protein from killing E.coli. The chain is Protein beta (Beta) from Escherichia coli (Bacteriophage P4).